The primary structure comprises 401 residues: Nicotinate phosphoribosyltransferase (401 aa).

At histidine 224 the chain carries Phosphohistidine; by autocatalysis.

Belongs to the NAPRTase family. In terms of processing, transiently phosphorylated on a His residue during the reaction cycle. Phosphorylation strongly increases the affinity for substrates and increases the rate of nicotinate D-ribonucleotide production. Dephosphorylation regenerates the low-affinity form of the enzyme, leading to product release.

It carries out the reaction nicotinate + 5-phospho-alpha-D-ribose 1-diphosphate + ATP + H2O = nicotinate beta-D-ribonucleotide + ADP + phosphate + diphosphate. Its pathway is cofactor biosynthesis; NAD(+) biosynthesis; nicotinate D-ribonucleotide from nicotinate: step 1/1. Functionally, catalyzes the synthesis of beta-nicotinate D-ribonucleotide from nicotinate and 5-phospho-D-ribose 1-phosphate at the expense of ATP. In Pseudomonas putida (strain ATCC 47054 / DSM 6125 / CFBP 8728 / NCIMB 11950 / KT2440), this protein is Nicotinate phosphoribosyltransferase.